The chain runs to 337 residues: Glyceraldehyde-3-phosphate dehydrogenase (337 aa).

NAD(+) contacts are provided by residues 12–13, D34, and K79; that span reads RI. Residues 150–152, T181, 210–211, and R233 each bind D-glyceraldehyde 3-phosphate; these read SCT and TG. The active-site Nucleophile is C151. Position 315 (N315) interacts with NAD(+).

Belongs to the glyceraldehyde-3-phosphate dehydrogenase family. As to quaternary structure, homotetramer. In terms of tissue distribution, expressed in all tissues examined.

Its subcellular location is the cytoplasm. The enzyme catalyses D-glyceraldehyde 3-phosphate + phosphate + NAD(+) = (2R)-3-phospho-glyceroyl phosphate + NADH + H(+). Its pathway is carbohydrate degradation; glycolysis; pyruvate from D-glyceraldehyde 3-phosphate: step 1/5. The protein is Glyceraldehyde-3-phosphate dehydrogenase (gpd) of Lentinula edodes (Shiitake mushroom).